Consider the following 361-residue polypeptide: Histidinol-phosphate aminotransferase (361 aa).

Lys-219 is subject to N6-(pyridoxal phosphate)lysine.

It belongs to the class-II pyridoxal-phosphate-dependent aminotransferase family. Histidinol-phosphate aminotransferase subfamily. As to quaternary structure, homodimer. Requires pyridoxal 5'-phosphate as cofactor.

It carries out the reaction L-histidinol phosphate + 2-oxoglutarate = 3-(imidazol-4-yl)-2-oxopropyl phosphate + L-glutamate. The protein operates within amino-acid biosynthesis; L-histidine biosynthesis; L-histidine from 5-phospho-alpha-D-ribose 1-diphosphate: step 7/9. In Acinetobacter baumannii (strain AB307-0294), this protein is Histidinol-phosphate aminotransferase.